A 387-amino-acid polypeptide reads, in one-letter code: Zinc transporter 7 (387 aa).

The Cytoplasmic portion of the chain corresponds to Met-1–Asn-37. A helical transmembrane segment spans residues Leu-38–Trp-58. The Lumenal segment spans residues Ser-59 to Asp-67. A helical membrane pass occupies residues Ser-68 to Ser-88. The Cytoplasmic segment spans residues Arg-89 to Arg-102. A helical transmembrane segment spans residues Ala-103–Phe-123. Residues Ser-124–Arg-140 are Lumenal-facing. Residues Leu-141–His-161 traverse the membrane as a helical segment. A his-rich loop region spans residues His-161–His-232. Over Gly-162–Gly-247 the chain is Cytoplasmic. The interval Ser-167–Gly-237 is disordered. Positions Gly-187 to Gly-201 are enriched in basic residues. Basic and acidic residues-rich tracts occupy residues His-202–His-214 and His-221–Thr-233. Residues Val-248–Leu-268 traverse the membrane as a helical segment. Residues Met-269 to Asp-273 are Lumenal-facing. The helical transmembrane segment at Leu-274–Val-294 threads the bilayer. At Pro-295–Met-387 the chain is on the cytoplasmic side.

This sequence belongs to the cation diffusion facilitator (CDF) transporter (TC 2.A.4) family. SLC30A subfamily. In terms of assembly, homooligomer.

The protein localises to the golgi apparatus membrane. It is found in the cytoplasmic vesicle. Its subcellular location is the golgi apparatus. The protein resides in the trans-Golgi network. It localises to the sarcoplasmic reticulum. The protein localises to the mitochondrion. It catalyses the reaction Zn(2+)(in) = Zn(2+)(out). Zinc ion transporter mediating zinc entry from the cytosol into the lumen of organelles along the secretory pathway. By contributing to zinc ion homeostasis within the early secretory pathway, regulates the activation and folding of enzymes like alkaline phosphatases. The chain is Zinc transporter 7 (slc30a7) from Danio rerio (Zebrafish).